The sequence spans 203 residues: Peptide deformylase (203 aa).

Positions 121 and 163 each coordinate Fe cation. Glutamate 164 is a catalytic residue. Residue histidine 167 participates in Fe cation binding.

The protein belongs to the polypeptide deformylase family. Requires Fe(2+) as cofactor.

It carries out the reaction N-terminal N-formyl-L-methionyl-[peptide] + H2O = N-terminal L-methionyl-[peptide] + formate. Its function is as follows. Removes the formyl group from the N-terminal Met of newly synthesized proteins. Requires at least a dipeptide for an efficient rate of reaction. N-terminal L-methionine is a prerequisite for activity but the enzyme has broad specificity at other positions. This Prochlorococcus marinus (strain MIT 9515) protein is Peptide deformylase.